Consider the following 306-residue polypeptide: Dermonecrotic toxin LiSicTox-alphaIA2ai (306 aa).

A signal peptide spans 1–18 (MLPYIALILVCWSVLSQA). Positions 19-26 (AQTDVEGR) are excised as a propeptide. The active site involves H38. Mg(2+) is bound by residues E58 and D60. H74 acts as the Nucleophile in catalysis. Cystine bridges form between C78/C84 and C80/C223. A Mg(2+)-binding site is contributed by D118. N-linked (GlcNAc...) asparagine glycosylation occurs at N283.

It belongs to the arthropod phospholipase D family. Class II subfamily. Class IIa sub-subfamily. It depends on Mg(2+) as a cofactor. As to expression, expressed by the venom gland.

It is found in the secreted. The catalysed reaction is an N-(acyl)-sphingosylphosphocholine = an N-(acyl)-sphingosyl-1,3-cyclic phosphate + choline. It catalyses the reaction an N-(acyl)-sphingosylphosphoethanolamine = an N-(acyl)-sphingosyl-1,3-cyclic phosphate + ethanolamine. The enzyme catalyses a 1-acyl-sn-glycero-3-phosphocholine = a 1-acyl-sn-glycero-2,3-cyclic phosphate + choline. It carries out the reaction a 1-acyl-sn-glycero-3-phosphoethanolamine = a 1-acyl-sn-glycero-2,3-cyclic phosphate + ethanolamine. In terms of biological role, dermonecrotic toxins cleave the phosphodiester linkage between the phosphate and headgroup of certain phospholipids (sphingolipid and lysolipid substrates), forming an alcohol (often choline) and a cyclic phosphate. This toxin acts on sphingomyelin (SM). It may also act on ceramide phosphoethanolamine (CPE), lysophosphatidylcholine (LPC) and lysophosphatidylethanolamine (LPE), but not on lysophosphatidylserine (LPS), and lysophosphatidylglycerol (LPG). It acts by transphosphatidylation, releasing exclusively cyclic phosphate products as second products. It induces complement-dependent hemolysis, dermonecrosis, vascular permeability and platelet aggregation. The protein is Dermonecrotic toxin LiSicTox-alphaIA2ai of Loxosceles intermedia (Brown spider).